Here is a 551-residue protein sequence, read N- to C-terminus: Solute carrier family 22 member 13 (551 aa).

Residues 1-20 (MAQFVQVLAEIGDFGRFQIQ) lie on the Cytoplasmic side of the membrane. A helical transmembrane segment spans residues 21-41 (LLILLCVLNFLSPFYFFAHVF). The Extracellular portion of the chain corresponds to 42–138 (MVLDEPHHCA…LVCDRKHLKD (97 aa)). N-linked (GlcNAc...) asparagine glycosylation is found at Asn-57, Asn-61, Asn-92, and Asn-104. Residues 139–159 (TTQSVFMAGLLVGTLMFGPLC) traverse the membrane as a helical segment. Residues 160 to 167 (DRIGRKAT) lie on the Cytoplasmic side of the membrane. The chain crosses the membrane as a helical span at residues 168–188 (ILAQLLLFTLIGLATAFVPSF). The Extracellular portion of the chain corresponds to 189–195 (ELYMALR). The chain crosses the membrane as a helical span at residues 196 to 216 (FAVATAVAGLSFSNVTLLTEW). Over 217–224 (VGPSWRTQ) the chain is Cytoplasmic. A helical transmembrane segment spans residues 225-245 (AVVLAQCNFSLGQMVLAGLAY). The Extracellular segment spans residues 246–251 (GFRNWR). A helical membrane pass occupies residues 252–272 (LLQITGTAPGLLLFFYFWALP). At 273-332 (ESARWLLTRGRMDEAIQLIQKAASVNRRKLSPELMNQLVPEKTGPSGNALDLFRHPQLRK) the chain is on the cytoplasmic side. Residues 333–353 (VTLIIFCVWFVDSLGYYGLSL) form a helical membrane-spanning segment. Residue Gln-354 is a topological domain, extracellular. The chain crosses the membrane as a helical span at residues 355–375 (VGDFGLDVYLTQLIFGAVEVP). At 376–397 (ARCSSIFMMQRFGRKWSQLGTL) the chain is on the cytoplasmic side. Residues 398–418 (VLGGLMCIIIIFIPADLPVVV) form a helical membrane-spanning segment. Over 419 to 427 (TMLAVVGKM) the chain is Extracellular. Residues 428 to 448 (ATAAAFTISYVYSAELFPTIL) form a helical membrane-spanning segment. At 449-452 (RQTG) the chain is on the cytoplasmic side. Residues 453–473 (MGLVGIFSRIGGILTPLVILL) traverse the membrane as a helical segment. Topologically, residues 474-478 (GEYHA) are extracellular. Residues 479-499 (ALPMLIYGSLPIVAGLLCTLL) traverse the membrane as a helical segment. At 500–551 (PETHGQGLKDTLQDLELGPHPRSPKSVPSEKETEAKGRTSSPGVAFVSSTYF) the chain is on the cytoplasmic side. A disordered region spans residues 511 to 551 (LQDLELGPHPRSPKSVPSEKETEAKGRTSSPGVAFVSSTYF). Residues 527–536 (PSEKETEAKG) are compositionally biased toward basic and acidic residues. Over residues 537-551 (RTSSPGVAFVSSTYF) the composition is skewed to polar residues.

This sequence belongs to the major facilitator (TC 2.A.1) superfamily. Organic cation transporter (TC 2.A.1.19) family. Glycosylated. As to expression, ubiquitous. Highly expressed in kidneys and to a weaker extent in brain, heart, and intestine. In kidneys, expressed in proximal convoluted tubule. In kidneys, also expressed in cortical collecting duct, whereas glomerulus and thick ascending limb exhibit no expression.

It localises to the apical cell membrane. It catalyses the reaction urate(out) + (S)-lactate(in) = urate(in) + (S)-lactate(out). It carries out the reaction urate(out) + succinate(in) = urate(in) + succinate(out). The enzyme catalyses urate(out) + glutathione(in) = urate(in) + glutathione(out). The catalysed reaction is nicotinate(in) + urate(out) = nicotinate(out) + urate(in). It catalyses the reaction orotate(out) + a carboxylate(in) = orotate(in) + a carboxylate(out). Its function is as follows. Anion antiporter that mediates the transport of urate, orotate and nicotinate in exchange for organic or inorganic anions. Translocates urate and orotate across the apical membrane of proximal tubule epithelial cells and involved in urate renal reabsorption. Possibly involved in orotate renal reabsorption and nicotinate intestinal reabsorption. Mediates urate uptake by an exchange with organic anions such as (S)-lactate, succinate, glutathione and nicotinate. Urate and orotate transports are Cl(-)-dependent. Shows similar transport characteristics as the urate/orotate renal antiporter SLC22A12/URAT1 and may act as a compensator of SLC22A12/URAT1 in certain conditions. The chain is Solute carrier family 22 member 13 from Homo sapiens (Human).